A 434-amino-acid chain; its full sequence is Septin-6 (434 aa).

Residue Ala2 is modified to N-acetylalanine. Ser27 carries the post-translational modification Phosphoserine. Residues 39-305 (QGFCFNILCV…ELYRRCKLEE (267 aa)) enclose the Septin-type G domain. Residues 49-56 (GETGLGKS) form a G1 motif region. GTP contacts are provided by residues 49–56 (GETGLGKS), Gly104, 185–193 (KADAISKSE), Gly239, and Arg254. Residues 101 to 104 (STVG) are G3 motif. Residues 184-187 (AKAD) are G4 motif. Positions 321–409 (QETYEAKRNE…KTAAELLQSQ (89 aa)) form a coiled coil. N6-acetyllysine is present on Lys367. Positions 405–434 (LLQSQGSQAGGSQTLKRDKEKKNNPWLCTE) are disordered. Residues 407 to 417 (QSQGSQAGGSQ) show a composition bias toward low complexity. At Ser416 the chain carries Phosphoserine. A Phosphothreonine modification is found at Thr418.

It belongs to the TRAFAC class TrmE-Era-EngA-EngB-Septin-like GTPase superfamily. Septin GTPase family. Septins polymerize into heterooligomeric protein complexes that form filaments, and associate with cellular membranes, actin filaments and microtubules. GTPase activity is required for filament formation. Filaments are assembled from asymmetrical heterotrimers, composed of SEPTIN2, SEPTIN6 and SEPTIN7 that associate head-to-head to form a hexameric unit. Within the trimer, directly interacts with SEPTIN2 and SEPTIN7. Also interacts with SEPTIN9 and SEPTIN12. Interaction with SEPTIN12 alters filament structure. Component of a septin core octameric complex consisting of SEPTIN12, SEPTIN7, SEPTIN6 and SEPTIN2 or SEPTIN4 in the order 12-7-6-2-2-6-7-12 or 12-7-6-4-4-6-7-12 and located in the sperm annulus. Interacts with SOCS7. Interacts with HNRNPA1. As to quaternary structure, (Microbial infection) Interacts with HCV NS5B. As to expression, widely expressed.

The protein localises to the cytoplasm. It is found in the cytoskeleton. Its subcellular location is the spindle. It localises to the chromosome. The protein resides in the centromere. The protein localises to the kinetochore. It is found in the cleavage furrow. Its subcellular location is the midbody. It localises to the cell projection. The protein resides in the cilium. The protein localises to the flagellum. In terms of biological role, filament-forming cytoskeletal GTPase. Required for normal organization of the actin cytoskeleton. Involved in cytokinesis. May play a role in HCV RNA replication. Forms a filamentous structure with SEPTIN12, SEPTIN6, SEPTIN2 and probably SEPTIN4 at the sperm annulus which is required for the structural integrity and motility of the sperm tail during postmeiotic differentiation. This is Septin-6 from Homo sapiens (Human).